The primary structure comprises 212 residues: Peptide methionine sulfoxide reductase MsrA (212 aa).

Cys52 is a catalytic residue.

It belongs to the MsrA Met sulfoxide reductase family.

It catalyses the reaction L-methionyl-[protein] + [thioredoxin]-disulfide + H2O = L-methionyl-(S)-S-oxide-[protein] + [thioredoxin]-dithiol. The enzyme catalyses [thioredoxin]-disulfide + L-methionine + H2O = L-methionine (S)-S-oxide + [thioredoxin]-dithiol. Has an important function as a repair enzyme for proteins that have been inactivated by oxidation. Catalyzes the reversible oxidation-reduction of methionine sulfoxide in proteins to methionine. The sequence is that of Peptide methionine sulfoxide reductase MsrA from Shigella boydii serotype 4 (strain Sb227).